The sequence spans 115 residues: Large ribosomal subunit protein bL19 (115 aa).

It belongs to the bacterial ribosomal protein bL19 family.

In terms of biological role, this protein is located at the 30S-50S ribosomal subunit interface and may play a role in the structure and function of the aminoacyl-tRNA binding site. The polypeptide is Large ribosomal subunit protein bL19 (Bacillus velezensis (strain DSM 23117 / BGSC 10A6 / LMG 26770 / FZB42) (Bacillus amyloliquefaciens subsp. plantarum)).